Here is a 318-residue protein sequence, read N- to C-terminus: MSMPGINVSNLLNEHEELGLRLLAGEKGLTNRINMSEINRPGLSLTGFYESFAHDRIQIFGKGEWAYITSRIPEDLKNIAADFFSFHLNCIIFTHGNMPPSIFTENCERLAIPLMISDVSTHKFITLISGILDRSLAPRTMRHGVLIEVFGIGILLSGKSGVGKSETALELIERGHRLVADDMVEIRRLSESYLIGTCSDLLRHHMEIRGLGILNIKDIFGIGSVRDHKLIELIIRLEEWTEDKDFDRTGLENPTEELLGVQIPLIRVPVKPGRNIPIIVETAAMNQRLRKLGKNAAQEFNQKLSNYLQQGKVERNPP.

Catalysis depends on residues histidine 143 and lysine 164. Glycine 158–serine 165 lines the ATP pocket. A Mg(2+)-binding site is contributed by serine 165. The active-site Proton acceptor; for phosphorylation activity. Proton donor; for dephosphorylation activity is aspartate 182. The interval methionine 206–asparagine 215 is important for the catalytic mechanism of both phosphorylation and dephosphorylation. Glutamate 207 serves as a coordination point for Mg(2+). Arginine 248 is a catalytic residue. The interval proline 269–arginine 274 is important for the catalytic mechanism of dephosphorylation.

It belongs to the HPrK/P family. As to quaternary structure, homohexamer. Requires Mg(2+) as cofactor.

The catalysed reaction is [HPr protein]-L-serine + ATP = [HPr protein]-O-phospho-L-serine + ADP + H(+). It carries out the reaction [HPr protein]-O-phospho-L-serine + phosphate + H(+) = [HPr protein]-L-serine + diphosphate. In terms of biological role, catalyzes the ATP- as well as the pyrophosphate-dependent phosphorylation of a specific serine residue in HPr, a phosphocarrier protein of the phosphoenolpyruvate-dependent sugar phosphotransferase system (PTS). HprK/P also catalyzes the pyrophosphate-producing, inorganic phosphate-dependent dephosphorylation (phosphorolysis) of seryl-phosphorylated HPr (P-Ser-HPr). The polypeptide is HPr kinase/phosphorylase (Leptospira borgpetersenii serovar Hardjo-bovis (strain L550)).